Consider the following 157-residue polypeptide: S-ribosylhomocysteine lyase (157 aa).

Positions 54, 58, and 124 each coordinate Fe cation.

It belongs to the LuxS family. In terms of assembly, homodimer. Fe cation serves as cofactor.

It carries out the reaction S-(5-deoxy-D-ribos-5-yl)-L-homocysteine = (S)-4,5-dihydroxypentane-2,3-dione + L-homocysteine. Functionally, involved in the synthesis of autoinducer 2 (AI-2) which is secreted by bacteria and is used to communicate both the cell density and the metabolic potential of the environment. The regulation of gene expression in response to changes in cell density is called quorum sensing. Catalyzes the transformation of S-ribosylhomocysteine (RHC) to homocysteine (HC) and 4,5-dihydroxy-2,3-pentadione (DPD). The polypeptide is S-ribosylhomocysteine lyase (Lactobacillus helveticus (strain DPC 4571)).